A 337-amino-acid chain; its full sequence is MDDLKALIGKVATGATLTREEASCAFDSMMSGEATPSQMGGLLMALRVRGETVDEITGAVAAMRSKMLRVTAPADAVDVVGTGGDGSGSVNVSTCASFIVAGAGVPVAKHGNRALSSKSGAADCLAALGIKIDLTPEQVGRCVNEAGIGFMFAPSHHPAMKNVGPTRVELATRTIFNLLGPLSNPAGVTRQMVGVFSRQWVQPLAQVLKNLGSDSVWVVHGSDGLDEITLAGPTFVAALENGNIRSFEVTPEDAGLSRAHGDALKGGDAEANAASLRGVLEGRPGAFRDVALLNAAAALIVAGKAKTLKDGVAFGTTSLDSGAAMNKLKQLIAVSNG.

5-phospho-alpha-D-ribose 1-diphosphate contacts are provided by residues Gly-81, 84 to 85 (GD), Ser-89, 91 to 94 (NVST), 109 to 117 (KHGNRALSS), and Ala-121. Gly-81 is an anthranilate binding site. Residue Ser-93 coordinates Mg(2+). Position 112 (Asn-112) interacts with anthranilate. Residue Arg-167 participates in anthranilate binding. Residues Asp-226 and Glu-227 each contribute to the Mg(2+) site.

The protein belongs to the anthranilate phosphoribosyltransferase family. In terms of assembly, homodimer. The cofactor is Mg(2+).

It carries out the reaction N-(5-phospho-beta-D-ribosyl)anthranilate + diphosphate = 5-phospho-alpha-D-ribose 1-diphosphate + anthranilate. It functions in the pathway amino-acid biosynthesis; L-tryptophan biosynthesis; L-tryptophan from chorismate: step 2/5. Its function is as follows. Catalyzes the transfer of the phosphoribosyl group of 5-phosphorylribose-1-pyrophosphate (PRPP) to anthranilate to yield N-(5'-phosphoribosyl)-anthranilate (PRA). The sequence is that of Anthranilate phosphoribosyltransferase from Nitrobacter hamburgensis (strain DSM 10229 / NCIMB 13809 / X14).